Reading from the N-terminus, the 299-residue chain is Probable inactive heme oxygenase 2, chloroplastic (299 aa).

Residues 1–15 (MASLLRPTPLLSTPR) show a composition bias toward low complexity. Disordered regions lie at residues 1–20 (MASL…LTHS), 45–70 (LCRS…KQYP), and 96–126 (DLSE…EETW). Residues 1 to 83 (MASLLRPTPL…IGITEEMRFV (83 aa)) constitute a chloroplast transit peptide. Polar residues predominate over residues 46–57 (CRSTPTPSQQKA). Residues 58–67 (SQRKRTRYRK) show a composition bias toward basic residues. A compositionally biased stretch (acidic residues) spans 105–122 (EKEEEEEEEDDDDDDEVK).

The protein belongs to the heme oxygenase family. Widely expressed at low levels.

The protein resides in the plastid. Its subcellular location is the chloroplast. Its function is as follows. Probable inactive heme oxygenase. Binds protoporphyrin IX, a precursor for both heme and chlorophyll biosynthesis. Plays a minor role in phytochrome assembly and photomorphogenesis. This Arabidopsis thaliana (Mouse-ear cress) protein is Probable inactive heme oxygenase 2, chloroplastic (HO2).